Reading from the N-terminus, the 71-residue chain is MPIIKVRENEPFDVALRRFKRSCEKAGILADVRAREFYEKPTTARKRAKAAAIKRLAKKLSRENARRVRLY.

The protein belongs to the bacterial ribosomal protein bS21 family.

The polypeptide is Small ribosomal subunit protein bS21 (Shewanella piezotolerans (strain WP3 / JCM 13877)).